A 315-amino-acid chain; its full sequence is MKPDNQAGVKHKGAAKTARIPIKIVPLDEKLKKPEWIRAKLPNGQRFHEIKQILREQKLHTVCEEATCPNIGECFSKGTATFMIMGDICTRRCPFCDVGHGRPNPLDENEPRHLAESVAAMRLKYVVVTSVDRDDLRDGGAQHFADCINAVREMSPATQIETLVPDFRGRLDIAVDILTQTPPDVMNHNLETVPRLYKQARPGADYAHSLQLLKDYKAKNPNVRTKSGLMVGLGETDEEILEVMRDLRAHNVDMLTIGQYLQPSDGHLPVLRYVHPDVFKMFEEKAYEMGFVHAAVGAMVRSSYHADVQAHEAGV.

[4Fe-4S] cluster-binding residues include C63, C68, C74, C89, C93, C96, and S303. The Radical SAM core domain maps to 75–292 (FSKGTATFMI…EEKAYEMGFV (218 aa)).

The protein belongs to the radical SAM superfamily. Lipoyl synthase family. [4Fe-4S] cluster serves as cofactor.

It localises to the cytoplasm. The catalysed reaction is [[Fe-S] cluster scaffold protein carrying a second [4Fe-4S](2+) cluster] + N(6)-octanoyl-L-lysyl-[protein] + 2 oxidized [2Fe-2S]-[ferredoxin] + 2 S-adenosyl-L-methionine + 4 H(+) = [[Fe-S] cluster scaffold protein] + N(6)-[(R)-dihydrolipoyl]-L-lysyl-[protein] + 4 Fe(3+) + 2 hydrogen sulfide + 2 5'-deoxyadenosine + 2 L-methionine + 2 reduced [2Fe-2S]-[ferredoxin]. It functions in the pathway protein modification; protein lipoylation via endogenous pathway; protein N(6)-(lipoyl)lysine from octanoyl-[acyl-carrier-protein]: step 2/2. Functionally, catalyzes the radical-mediated insertion of two sulfur atoms into the C-6 and C-8 positions of the octanoyl moiety bound to the lipoyl domains of lipoate-dependent enzymes, thereby converting the octanoylated domains into lipoylated derivatives. This is Lipoyl synthase from Chromobacterium violaceum (strain ATCC 12472 / DSM 30191 / JCM 1249 / CCUG 213 / NBRC 12614 / NCIMB 9131 / NCTC 9757 / MK).